We begin with the raw amino-acid sequence, 101 residues long: Urease subunit beta (101 aa).

Belongs to the urease beta subunit family. In terms of assembly, heterotrimer of UreA (gamma), UreB (beta) and UreC (alpha) subunits. Three heterotrimers associate to form the active enzyme.

The protein resides in the cytoplasm. The catalysed reaction is urea + 2 H2O + H(+) = hydrogencarbonate + 2 NH4(+). It functions in the pathway nitrogen metabolism; urea degradation; CO(2) and NH(3) from urea (urease route): step 1/1. The polypeptide is Urease subunit beta (Paraburkholderia phymatum (strain DSM 17167 / CIP 108236 / LMG 21445 / STM815) (Burkholderia phymatum)).